The following is a 143-amino-acid chain: Peptide methionine sulfoxide reductase MsrB (143 aa).

The MsrB domain occupies 5 to 127 (NEELKKKLTP…NSAALRFIPK (123 aa)). Catalysis depends on Cys-116, which acts as the Nucleophile.

This sequence belongs to the MsrB Met sulfoxide reductase family.

The catalysed reaction is L-methionyl-[protein] + [thioredoxin]-disulfide + H2O = L-methionyl-(R)-S-oxide-[protein] + [thioredoxin]-dithiol. The sequence is that of Peptide methionine sulfoxide reductase MsrB from Halalkalibacterium halodurans (strain ATCC BAA-125 / DSM 18197 / FERM 7344 / JCM 9153 / C-125) (Bacillus halodurans).